Here is a 284-residue protein sequence, read N- to C-terminus: 4-hydroxybenzoate octaprenyltransferase (284 aa).

7 consecutive transmembrane segments (helical) span residues 13-32, 90-110, 112-132, 134-154, 164-184, 200-220, and 224-244; these read FNRP…ALWL, ALML…FTDL, TILL…MKRY, HLPQ…AYSA, LWML…YYAM, ILFG…TLSL, and IGLL…CVGL.

Belongs to the UbiA prenyltransferase family. The cofactor is Mg(2+).

The protein localises to the cell inner membrane. The catalysed reaction is all-trans-octaprenyl diphosphate + 4-hydroxybenzoate = 4-hydroxy-3-(all-trans-octaprenyl)benzoate + diphosphate. Its pathway is cofactor biosynthesis; ubiquinone biosynthesis. In terms of biological role, catalyzes the prenylation of para-hydroxybenzoate (PHB) with an all-trans polyprenyl group. Mediates the second step in the final reaction sequence of ubiquinone-8 (UQ-8) biosynthesis, which is the condensation of the polyisoprenoid side chain with PHB, generating the first membrane-bound Q intermediate 3-octaprenyl-4-hydroxybenzoate. The protein is 4-hydroxybenzoate octaprenyltransferase of Marinomonas sp. (strain MWYL1).